A 313-amino-acid polypeptide reads, in one-letter code: 4-hydroxy-3-methylbut-2-enyl diphosphate reductase (313 aa).

Cys-12 contacts [4Fe-4S] cluster. (2E)-4-hydroxy-3-methylbut-2-enyl diphosphate is bound by residues His-41 and His-74. Dimethylallyl diphosphate is bound by residues His-41 and His-74. Positions 41 and 74 each coordinate isopentenyl diphosphate. Position 96 (Cys-96) interacts with [4Fe-4S] cluster. His-124 is a (2E)-4-hydroxy-3-methylbut-2-enyl diphosphate binding site. His-124 lines the dimethylallyl diphosphate pocket. His-124 provides a ligand contact to isopentenyl diphosphate. Glu-126 functions as the Proton donor in the catalytic mechanism. A (2E)-4-hydroxy-3-methylbut-2-enyl diphosphate-binding site is contributed by Thr-164. Cys-194 is a [4Fe-4S] cluster binding site. Residues Ser-222, Ser-223, Asn-224, and Ser-266 each coordinate (2E)-4-hydroxy-3-methylbut-2-enyl diphosphate. Dimethylallyl diphosphate is bound by residues Ser-222, Ser-223, Asn-224, and Ser-266. 4 residues coordinate isopentenyl diphosphate: Ser-222, Ser-223, Asn-224, and Ser-266.

This sequence belongs to the IspH family. Requires [4Fe-4S] cluster as cofactor.

It catalyses the reaction isopentenyl diphosphate + 2 oxidized [2Fe-2S]-[ferredoxin] + H2O = (2E)-4-hydroxy-3-methylbut-2-enyl diphosphate + 2 reduced [2Fe-2S]-[ferredoxin] + 2 H(+). The catalysed reaction is dimethylallyl diphosphate + 2 oxidized [2Fe-2S]-[ferredoxin] + H2O = (2E)-4-hydroxy-3-methylbut-2-enyl diphosphate + 2 reduced [2Fe-2S]-[ferredoxin] + 2 H(+). Its pathway is isoprenoid biosynthesis; dimethylallyl diphosphate biosynthesis; dimethylallyl diphosphate from (2E)-4-hydroxy-3-methylbutenyl diphosphate: step 1/1. It participates in isoprenoid biosynthesis; isopentenyl diphosphate biosynthesis via DXP pathway; isopentenyl diphosphate from 1-deoxy-D-xylulose 5-phosphate: step 6/6. Its function is as follows. Catalyzes the conversion of 1-hydroxy-2-methyl-2-(E)-butenyl 4-diphosphate (HMBPP) into a mixture of isopentenyl diphosphate (IPP) and dimethylallyl diphosphate (DMAPP). Acts in the terminal step of the DOXP/MEP pathway for isoprenoid precursor biosynthesis. In Burkholderia pseudomallei (strain 1026b), this protein is 4-hydroxy-3-methylbut-2-enyl diphosphate reductase.